The following is a 243-amino-acid chain: Terpene cyclase penB (243 aa).

3 helical membrane-spanning segments follow: residues 19 to 39 (IANI…VGMI), 48 to 68 (YGMA…YSLI), and 78 to 98 (GVFI…IKFA). A glycan (N-linked (GlcNAc...) asparagine) is linked at asparagine 111. Helical transmembrane passes span 112 to 132 (LSLI…ALAA), 137 to 157 (SLAY…GGLC), 172 to 194 (LWLS…WMYW), and 205 to 225 (LVLW…LCYW).

This sequence belongs to the paxB family.

The protein localises to the membrane. It participates in secondary metabolite biosynthesis. In terms of biological role, terpene cyclase; part of the gene cluster that mediates the biosynthesis of the indole diterpenes penitrems. The geranylgeranyl diphosphate (GGPP) synthase penG catalyzes the first step in penitrem biosynthesis via conversion of farnesyl pyrophosphate and isopentyl pyrophosphate into geranylgeranyl pyrophosphate (GGPP). Condensation of indole-3-glycerol phosphate with GGPP by the prenyl transferase penC then forms 3-geranylgeranylindole (3-GGI). Epoxidation by the FAD-dependent monooxygenase penM leads to a epoxidized-GGI that is substrate of the terpene cyclase penB for cyclization to yield paspaline. Paspaline is subsequently converted to 13-desoxypaxilline by the cytochrome P450 monooxygenase penP, the latter being then converted to paxilline by the cytochrome P450 monooxygenase penQ. Paxilline is converted to beta-paxitriol via C-10 ketoreduction by the short-chain dehydrogenase PC-15 which can be monoprenylated at the C-20 by the indole diterpene prenyltransferase penD. A two-step elimination (acetylation and elimination) process performed by the O-acetyltransferase PC-16 and the P.simplicissimum ptmI-ortholog not yet identified in P.crustosum, leads to the production of the prenylated form of penijanthine. The FAD-linked oxidoreductase ptmO then converts the prenylated form of penijanthine into PC-M5 which is in turn transformed into PC-M4 by the aromatic dimethylallyltransferase PC-22. A series of oxidation steps involving 4 cytochrome P450 monooxygenases (PC-21, PC-05, PC-23, PC-20) and a FAD-dependent monooxygenase (PC-14) are required for the transformation of PC-M4 to penitrems A and E. Synthesis of these final products is proposed to proceed via penitrems D and C (PC-21, PC-05, PC-14) and penitrems B and F (PC-21, PC-05, PC-14, PC-23). This is Terpene cyclase penB (penB) from Penicillium crustosum (Blue mold fungus).